We begin with the raw amino-acid sequence, 159 residues long: Ribosomal RNA large subunit methyltransferase H (159 aa).

Residues Leu-76, Gly-108, and 127–132 (FGKLTL) each bind S-adenosyl-L-methionine.

It belongs to the RNA methyltransferase RlmH family. As to quaternary structure, homodimer.

It localises to the cytoplasm. It catalyses the reaction pseudouridine(1915) in 23S rRNA + S-adenosyl-L-methionine = N(3)-methylpseudouridine(1915) in 23S rRNA + S-adenosyl-L-homocysteine + H(+). Functionally, specifically methylates the pseudouridine at position 1915 (m3Psi1915) in 23S rRNA. In Latilactobacillus sakei subsp. sakei (strain 23K) (Lactobacillus sakei subsp. sakei), this protein is Ribosomal RNA large subunit methyltransferase H.